A 312-amino-acid chain; its full sequence is R2-like ligand binding oxidase (312 aa).

Positions 68, 101, and 104 each coordinate Mn(2+). A cross-link (3-(O4'-tyrosyl)-valine (Val-Tyr)) is located at residues 71–162 (VTQDIQPFMA…AAQVRASVTY (92 aa)). Glutamate 101 contributes to the Fe cation binding site. Fe cation is bound by residues glutamate 167, glutamate 202, and histidine 205.

The protein belongs to the ribonucleoside diphosphate reductase small chain family. R2-like ligand binding oxidase subfamily. In terms of assembly, homodimer. The cofactor is Fe cation. Mn(2+) is required as a cofactor.

Its function is as follows. Probable oxidase that might be involved in lipid metabolism. The protein is R2-like ligand binding oxidase of Mycolicibacterium vanbaalenii (strain DSM 7251 / JCM 13017 / BCRC 16820 / KCTC 9966 / NRRL B-24157 / PYR-1) (Mycobacterium vanbaalenii).